The sequence spans 336 residues: Fructose-1,6-bisphosphatase class 1 (336 aa).

Mg(2+) is bound by residues Glu92, Asp115, Leu117, and Asp118. Substrate-binding positions include 118 to 121 (DGSS), Asn211, Tyr244, 262 to 264 (YLY), and Lys274. Glu280 lines the Mg(2+) pocket.

The protein belongs to the FBPase class 1 family. As to quaternary structure, homotetramer. It depends on Mg(2+) as a cofactor.

It is found in the cytoplasm. The enzyme catalyses beta-D-fructose 1,6-bisphosphate + H2O = beta-D-fructose 6-phosphate + phosphate. It participates in carbohydrate biosynthesis; gluconeogenesis. The chain is Fructose-1,6-bisphosphatase class 1 from Aliivibrio salmonicida (strain LFI1238) (Vibrio salmonicida (strain LFI1238)).